The primary structure comprises 199 residues: NAD(P)H quinone oxidoreductase PST3 (199 aa).

The 189-residue stretch at 5-193 folds into the Flavodoxin-like domain; sequence VAIIIYSLYH…EIAFIQGKSF (189 aa). FMN is bound by residues 11 to 15 and 111 to 165; these read SLYHH and IFVS…SPYG.

The protein belongs to the WrbA family. FMN serves as cofactor.

It is found in the cell membrane. The catalysed reaction is a quinone + NADH + H(+) = a quinol + NAD(+). It catalyses the reaction a quinone + NADPH + H(+) = a quinol + NADP(+). Flavodoxin-like protein (FLP) that plays a role in cell wall integrity, oxidative stress protection and virulence. FLPs act as NAD(P)H quinone oxidoreductases. Reduces ubiquinone (coenzyme Q), enabling it to serve as an antioxidant in the membrane. This is NAD(P)H quinone oxidoreductase PST3 from Candida albicans (strain SC5314 / ATCC MYA-2876) (Yeast).